We begin with the raw amino-acid sequence, 251 residues long: Myozenin-3 (251 aa).

Phosphoserine is present on serine 31. The segment at 50–67 (LLFQKRQRRVQKFTFELA) is binding to ACTN2, PPP3CA and TCAP. The binding to FLNC stretch occupies residues 67 to 110 (AASQRAMLAGSARRKVTGTAESGTVANANGPEGPNYRSELHIFP). Positions 79–102 (RRKVTGTAESGTVANANGPEGPNY) are disordered. Residues 186 to 207 (PSPNDYRNFNKTPVPFGGPLVG) are binding to ACTN2.

This sequence belongs to the myozenin family. As to quaternary structure, interacts with ACTN2, LDB3, FLNC, PPP3CA and TCAP. Expressed specifically in skeletal muscle. Not detected in heart.

The protein resides in the cytoplasm. It localises to the myofibril. It is found in the sarcomere. The protein localises to the z line. Its function is as follows. Myozenins may serve as intracellular binding proteins involved in linking Z line proteins such as alpha-actinin, gamma-filamin, TCAP/telethonin, LDB3/ZASP and localizing calcineurin signaling to the sarcomere. Plays an important role in the modulation of calcineurin signaling. May play a role in myofibrillogenesis. The sequence is that of Myozenin-3 from Homo sapiens (Human).